Consider the following 284-residue polypeptide: tRNA uridine(34) hydroxylase (284 aa).

Residues 132-226 (AGRPVVMLDT…YFEEVGGAHY (95 aa)) form the Rhodanese domain. Cys-186 acts as the Cysteine persulfide intermediate in catalysis.

Belongs to the TrhO family.

The enzyme catalyses uridine(34) in tRNA + AH2 + O2 = 5-hydroxyuridine(34) in tRNA + A + H2O. Catalyzes oxygen-dependent 5-hydroxyuridine (ho5U) modification at position 34 in tRNAs. This is tRNA uridine(34) hydroxylase from Burkholderia orbicola (strain MC0-3).